The sequence spans 380 residues: Cytochrome b (380 aa).

The next 4 helical transmembrane spans lie at 33 to 53 (FGSL…FLAM), 77 to 98 (WLIR…YLHI), 113 to 133 (WNVG…GYVL), and 178 to 198 (FFAF…IHLL). Residues histidine 83 and histidine 97 each contribute to the heme b site. 2 residues coordinate heme b: histidine 182 and histidine 196. Histidine 201 is an a ubiquinone binding site. 4 consecutive transmembrane segments (helical) span residues 226 to 246 (YKDL…ALFS), 288 to 308 (LGGV…PILH), 320 to 340 (ITQF…WIGG), and 347 to 367 (FIII…VLTP).

It belongs to the cytochrome b family. The cytochrome bc1 complex contains 3 respiratory subunits (MT-CYB, CYC1 and UQCRFS1), 2 core proteins (UQCRC1 and UQCRC2) and probably 6 low-molecular weight proteins. The cofactor is heme b.

Its subcellular location is the mitochondrion inner membrane. Functionally, component of the ubiquinol-cytochrome c reductase complex (complex III or cytochrome b-c1 complex) that is part of the mitochondrial respiratory chain. The b-c1 complex mediates electron transfer from ubiquinol to cytochrome c. Contributes to the generation of a proton gradient across the mitochondrial membrane that is then used for ATP synthesis. This Dactyloptena peterseni (Starry flying gurnard) protein is Cytochrome b (mt-cyb).